Reading from the N-terminus, the 272-residue chain is Short-chain dehydrogenase srdC (272 aa).

NADP(+)-binding residues include isoleucine 15, aspartate 65, arginine 127, tyrosine 173, lysine 177, valine 206, and threonine 208. Tyrosine 173 (proton donor) is an active-site residue. Lysine 177 functions as the Lowers pKa of active site Tyr in the catalytic mechanism.

It belongs to the short-chain dehydrogenases/reductases (SDR) family.

Its function is as follows. Short-chain dehydrogenase; part of the gene cluster that mediates the biosynthesis of sordarial, a salicylic aldehyde structurally related to the phytotoxin pyriculol. The most interesting aspect of this pathway is formation of an aromatic product from the highly reducing polyketide synthase srdA. SrdA synthesizes a reduced polyketide chain from one molecule of acetyl-CoA and five molecules of malonyl-CoA. The polyketide chain is then reductively released as an aldehyde. The oxidoreductases srdC, srdD and srdE then oxidize one of the hydroxy groups to facilitate the intramolecular aldol condensation, followed by dehydration to yield a salicylic aldehyde. This aldehyde can undergo facile reduction by endogenous reductases to yield the alcohol 1-hydroxy-2-hydroxymethyl-3-pent-1,3-dienylbenzene. The flavin-dependent srdI counteract against the propensity of the aldehydes to be reduced under physiological conditions and is responsible for reoxidizing 1-hydroxy-2-hydroxymethyl-3-pent-1,3-dienylbenzene back to the salicylic aldehyde. This salicylic aldehyde is then selectively epoxidized by the cupin-domain-containing oxidoreductase srdB to yield the epoxide, which can be hydrolyzed stereoselectively by the hydrolase srdG to give the final product sordarial. This is Short-chain dehydrogenase srdC from Neurospora crassa (strain ATCC 24698 / 74-OR23-1A / CBS 708.71 / DSM 1257 / FGSC 987).